Here is a 601-residue protein sequence, read N- to C-terminus: Protein CT_858 (601 aa).

It belongs to the chlamydial CPn_1016/CT_858/TC_0248 family.

This Chlamydia trachomatis serovar D (strain ATCC VR-885 / DSM 19411 / UW-3/Cx) protein is Protein CT_858.